An 896-amino-acid polypeptide reads, in one-letter code: Protein translocase subunit SecA (896 aa).

ATP-binding positions include Q87, 105–109 (GEGKT), and D507. A disordered region spans residues 853–879 (ESLSENDEASETQTFRRQEKKIGRNDP). The segment covering 866-876 (TFRRQEKKIGR) has biased composition (basic and acidic residues). Zn(2+)-binding residues include C880, C882, C891, and H892.

It belongs to the SecA family. In terms of assembly, monomer and homodimer. Part of the essential Sec protein translocation apparatus which comprises SecA, SecYEG and auxiliary proteins SecDF-YajC and YidC. It depends on Zn(2+) as a cofactor.

It localises to the cell inner membrane. The protein resides in the cytoplasm. The enzyme catalyses ATP + H2O + cellular proteinSide 1 = ADP + phosphate + cellular proteinSide 2.. Its function is as follows. Part of the Sec protein translocase complex. Interacts with the SecYEG preprotein conducting channel. Has a central role in coupling the hydrolysis of ATP to the transfer of proteins into and across the cell membrane, serving both as a receptor for the preprotein-SecB complex and as an ATP-driven molecular motor driving the stepwise translocation of polypeptide chains across the membrane. This is Protein translocase subunit SecA from Legionella pneumophila subsp. pneumophila (strain Philadelphia 1 / ATCC 33152 / DSM 7513).